The primary structure comprises 364 residues: Melatonin receptor type 1B (364 aa).

An N-terminal signal peptide occupies residues 1 to 28 (MPDNSSIANCCAASGLAARPSWPGSAEA). Over 29-45 (EPPETPRAPWVAPMLST) the chain is Extracellular. Residues 46-66 (VVIVTTAVDFVGNLLVILSVL) traverse the membrane as a helical segment. Residues 67-81 (RNRKLRNAGNLFVVN) are Cytoplasmic-facing. A helical transmembrane segment spans residues 82 to 102 (LALADLVVALYPYPLILVAIL). The Extracellular segment spans residues 103–115 (HDGWVLGEIHCKA). Cys-113 and Cys-190 are oxidised to a cystine. Residues 116–136 (SAFVMGLSVIGSVFNITAIAI) traverse the membrane as a helical segment. Topologically, residues 137–158 (NRYWCICHSATYHRACSQWHAP) are cytoplasmic. A helical transmembrane segment spans residues 159–179 (LYISLIWLLTLVALVPNFFVG). Residues 180–200 (SLEYDPRIYSCTFIQTASTQY) are Extracellular-facing. Residues 201–221 (TMAVVAIHFLLPIAVVSFCYL) form a helical membrane-spanning segment. The Cytoplasmic segment spans residues 222–255 (RIWILVLQARRKAKAERKLRLRPSDLRSFLTMFA). A helical membrane pass occupies residues 256-276 (VFVVFAICWAPLNCIGLAVAI). Residues 277–287 (NPEAMALQIPE) are Extracellular-facing. The helical transmembrane segment at 288–308 (GLFVTSYFLAYFNSCLNAIVY) threads the bilayer. The Cytoplasmic segment spans residues 309-364 (GLLNQNFRREYKRILSALWSTGRCFHDASKCHLTEDLQGPVPPAAMATIPVQEGAL).

The protein belongs to the G-protein coupled receptor 1 family. Expressed in the hippocampus, kidney, and ovary.

The protein localises to the cell membrane. Functionally, high affinity receptor for melatonin. The activity of this receptor is mediated by pertussis toxin sensitive G proteins that inhibits adenylate cyclase activity. The protein is Melatonin receptor type 1B of Rattus norvegicus (Rat).